The primary structure comprises 121 residues: Small ribosomal subunit protein bS6 (121 aa).

Belongs to the bacterial ribosomal protein bS6 family.

In terms of biological role, binds together with bS18 to 16S ribosomal RNA. This chain is Small ribosomal subunit protein bS6 (rpsF), found in Rickettsia prowazekii (strain Madrid E).